The following is a 582-amino-acid chain: Bifunctional lycopene cyclase/phytoene synthase (582 aa).

The lycopene beta-cyclase stretch occupies residues 1-261 (MNQNGTRLCY…VVLGLVGCDY (261 aa)). Transmembrane regions (helical) follow at residues 34–54 (CTYT…FFTA), 59–79 (KICI…SYLI), 99–121 (IPIE…YCIF), 142–162 (YVVA…LLLG), 170–190 (LILV…YPFL), and 242–262 (ALFF…CDYA). Residues 268–582 (YESLSQPASD…LLSALVYRLE (315 aa)) are phytoene synthase.

In the N-terminal section; belongs to the lycopene beta-cyclase family. It in the C-terminal section; belongs to the phytoene/squalene synthase family.

It is found in the membrane. It carries out the reaction all-trans-lycopene = gamma-carotene. The catalysed reaction is gamma-carotene = all-trans-beta-carotene. It catalyses the reaction 2 (2E,6E,10E)-geranylgeranyl diphosphate = 15-cis-phytoene + 2 diphosphate. Its pathway is carotenoid biosynthesis; beta-carotene biosynthesis. It participates in carotenoid biosynthesis; phytoene biosynthesis; all-trans-phytoene from geranylgeranyl diphosphate: step 1/1. Bifunctional enzyme that catalyzes the reactions from geranylgeranyl diphosphate to phytoene (phytoene synthase) and lycopene to beta-carotene via the intermediate gamma-carotene (lycopene cyclase). The protein is Bifunctional lycopene cyclase/phytoene synthase of Aspergillus niger (strain ATCC MYA-4892 / CBS 513.88 / FGSC A1513).